The primary structure comprises 693 residues: Follicle-stimulating hormone receptor (693 aa).

The N-terminal stretch at methionine 1–cysteine 18 is a signal peptide. 2 disulfides stabilise this stretch: cysteine 18–cysteine 25 and cysteine 23–cysteine 32. In terms of domain architecture, LRRNT spans glutamine 19–threonine 46. Residues glutamine 19–arginine 366 are Extracellular-facing. Asparagine 47 carries N-linked (GlcNAc...) asparagine glycosylation. 9 LRR repeats span residues threonine 49–leucine 72, glutamate 73–leucine 97, histidine 98–histidine 118, leucine 119–serine 143, phenylalanine 144–serine 169, serine 170–glycine 192, threonine 193–glycine 216, alanine 217–leucine 240, and isoleucine 241–serine 259. Asparagine 191 and asparagine 199 each carry an N-linked (GlcNAc...) asparagine glycan. N-linked (GlcNAc...) asparagine glycosylation occurs at asparagine 268. Disulfide bonds link cysteine 275–cysteine 346, cysteine 276–cysteine 292, cysteine 276–cysteine 356, and cysteine 292–cysteine 338. The helical transmembrane segment at valine 367–leucine 387 threads the bilayer. Residues isoleucine 388–arginine 398 lie on the Cytoplasmic side of the membrane. The helical transmembrane segment at phenylalanine 399–valine 421 threads the bilayer. Topologically, residues aspartate 422–asparagine 443 are extracellular. Cysteines 442 and 517 form a disulfide. The chain crosses the membrane as a helical span at residues alanine 444–leucine 465. The Cytoplasmic segment spans residues glutamate 466–histidine 485. A helical membrane pass occupies residues alanine 486–valine 508. Residues serine 509 to glutamine 528 lie on the Extracellular side of the membrane. Residues alanine 529–isoleucine 550 traverse the membrane as a helical segment. Residues cysteine 551 to arginine 573 are Cytoplasmic-facing. A helical transmembrane segment spans residues methionine 574–leucine 597. The Extracellular portion of the chain corresponds to lysine 598–lysine 608. A helical membrane pass occupies residues isoleucine 609–threonine 630. At lysine 631–asparagine 693 the chain is on the cytoplasmic side.

Belongs to the G-protein coupled receptor 1 family. FSH/LSH/TSH subfamily. In terms of assembly, homotrimer. Functions as a homotrimer binding the FSH hormone heterodimer composed of CGA and FSHB.

It is found in the cell membrane. Its function is as follows. G protein-coupled receptor for follitropin, the follicle-stimulating hormone. Through cAMP production activates the downstream PI3K-AKT and ERK1/ERK2 signaling pathways. This is Follicle-stimulating hormone receptor (FSHR) from Cairina moschata (Muscovy duck).